We begin with the raw amino-acid sequence, 649 residues long: Mediator of RNA polymerase II transcription subunit 17 (649 aa).

Residues 51-79 are disordered; sequence QGSGSEEEEAAGPDGDAPDWGGAGADQDD.

The protein belongs to the Mediator complex subunit 17 family. In terms of assembly, component of the Mediator complex, which is composed of MED1, MED4, MED6, MED7, MED8, MED9, MED10, MED11, MED12, MED13, MED13L, MED14, MED15, MED16, MED17, MED18, MED19, MED20, MED21, MED22, MED23, MED24, MED25, MED26, MED27, MED29, MED30, MED31, CCNC, CDK8 and CDC2L6/CDK11. The MED12, MED13, CCNC and CDK8 subunits form a distinct module termed the CDK8 module. Mediator containing the CDK8 module is less active than Mediator lacking this module in supporting transcriptional activation. Individual preparations of the Mediator complex lacking one or more distinct subunits have been variously termed ARC, CRSP, DRIP, PC2, SMCC and TRAP. Interacts with STAT2. Interacts with GATA1 and PPARG.

It localises to the nucleus. Its function is as follows. Component of the Mediator complex, a coactivator involved in the regulated transcription of nearly all RNA polymerase II-dependent genes. Mediator functions as a bridge to convey information from gene-specific regulatory proteins to the basal RNA polymerase II transcription machinery. Mediator is recruited to promoters by direct interactions with regulatory proteins and serves as a scaffold for the assembly of a functional preinitiation complex with RNA polymerase II and the general transcription factors. The polypeptide is Mediator of RNA polymerase II transcription subunit 17 (Med17) (Mus musculus (Mouse)).